The primary structure comprises 318 residues: Protoheme IX farnesyltransferase (318 aa).

The next 9 helical transmembrane spans lie at 27-47, 52-72, 103-123, 124-144, 152-172, 179-199, 225-245, 248-268, and 288-308; these read IMMLVVFTAVAGLAAASGMTG, PAMAAIAVLAVALGSGAAGAI, LTMGLIMSGVSVMLMWLASNW, LAAALLAFSIFYYGVIYTMWL, IVIGGGAGAFPPVIGWAAVTG, WILFAIIFFWTPPHFWALSLL, ILVYTLVLIPVSLAPLATGLG, IYGAVAGGLGLVFLAYAVAIL, and AFLFSILYLFALFGAVLVEHA.

Belongs to the UbiA prenyltransferase family. Protoheme IX farnesyltransferase subfamily. Interacts with CtaA.

It localises to the cell inner membrane. It catalyses the reaction heme b + (2E,6E)-farnesyl diphosphate + H2O = Fe(II)-heme o + diphosphate. It functions in the pathway porphyrin-containing compound metabolism; heme O biosynthesis; heme O from protoheme: step 1/1. In terms of biological role, converts heme B (protoheme IX) to heme O by substitution of the vinyl group on carbon 2 of heme B porphyrin ring with a hydroxyethyl farnesyl side group. This is Protoheme IX farnesyltransferase from Hyphomonas neptunium (strain ATCC 15444).